A 242-amino-acid polypeptide reads, in one-letter code: Probable ABC transporter ATP-binding protein PEB1C (242 aa).

The 235-residue stretch at 2–236 (IELKNVNKYY…PKTERARLFL (235 aa)) folds into the ABC transporter domain. ATP is bound at residue 34–41 (GPSGSGKS).

The protein belongs to the ABC transporter superfamily.

It is found in the cell inner membrane. Functionally, most probably involved, with PEB1, in a binding-protein-dependent transport system for an amino acid. Probably responsible for energy coupling to the transport system. The polypeptide is Probable ABC transporter ATP-binding protein PEB1C (peb1C) (Campylobacter jejuni subsp. jejuni serotype O:23/36 (strain 81-176)).